A 546-amino-acid polypeptide reads, in one-letter code: Putative inactive G-type lectin S-receptor-like serine/threonine-protein kinase SRK (546 aa).

The N-terminal stretch at methionine 1–serine 31 is a signal peptide. At valine 32–lysine 441 the chain is on the extracellular side. The Bulb-type lectin domain occupies threonine 34 to tryptophan 154. Residues asparagine 46, asparagine 120, asparagine 147, and asparagine 243 are each glycosylated (N-linked (GlcNAc...) asparagine). Positions proline 293–glutamine 329 constitute an EGF-like; atypical domain. Cystine bridges form between cysteine 297–cysteine 309, cysteine 303–cysteine 317, cysteine 378–cysteine 403, and cysteine 382–cysteine 388. One can recognise a PAN domain in the interval cysteine 348–alanine 428. Asparagine 387 carries an N-linked (GlcNAc...) asparagine glycan. Residues isoleucine 442–phenylalanine 462 traverse the membrane as a helical segment. The Cytoplasmic portion of the chain corresponds to tryptophan 463 to glycine 546. The Protein kinase domain occupies phenylalanine 524 to glycine 546. Leucine 530–valine 538 is an ATP binding site.

It belongs to the protein kinase superfamily. Ser/Thr protein kinase family.

It is found in the cell membrane. Functionally, truncated and inactivated form of SRK, the female specificity determinant of self-incompatibility when active. Most A.thaliana cultivars contain such an inactive form and thus, are self-fertiles. The polypeptide is Putative inactive G-type lectin S-receptor-like serine/threonine-protein kinase SRK (PSEUDOSRKA) (Arabidopsis thaliana (Mouse-ear cress)).